The following is a 243-amino-acid chain: UPF0758 protein Cyan7425_1778 (243 aa).

The MPN domain occupies 112–235 (TIINDPAVAA…FRSLRQTTKL (124 aa)). Zn(2+)-binding residues include His-184, His-186, and Asp-197. Residues 184–197 (HNHPSGNVEPSPED) carry the JAMM motif motif.

This sequence belongs to the UPF0758 family.

This chain is UPF0758 protein Cyan7425_1778, found in Cyanothece sp. (strain PCC 7425 / ATCC 29141).